Consider the following 1102-residue polypeptide: Phosphatidylinositol 4,5-bisphosphate 3-kinase catalytic subunit gamma isoform (1102 aa).

In terms of domain architecture, PI3K-ABD spans 34–141; sequence SMELIPIEFV…PGQIHLVQRH (108 aa). One can recognise a PI3K-RBD domain in the interval 217 to 309; that stretch reads NNCIFIVIHR…GEEIHVVLDT (93 aa). The C2 PI3K-type domain occupies 357–521; it reads CDRKFRVKIR…NSMSISILLD (165 aa). Residues 541–723 form the PIK helical domain; sequence DRVRAEMPNQ…AVILEAYLRG (183 aa). The PI3K/PI4K catalytic domain maps to 797–1080; that stretch reads AIEKCKVMAS…QIEVCRDKGW (284 aa). The interval 803-809 is G-loop; the sequence is VMASKKK. Residues 829-838 and 864-872 each bind ATP; these read GIIFKHGDDL and LLPYGCIST. The segment at 943–951 is catalytic loop; the sequence is GIGDRHNDN. Residue 961–969 coordinates ATP; it reads FHIDFGHIL. The tract at residues 962–988 is activation loop; that stretch reads HIDFGHILGNYKSFLGINKERVPFVLT. At Thr1024 the chain carries Phosphothreonine; by PKA. Phosphoserine; by autocatalysis is present on Ser1101.

The protein belongs to the PI3/PI4-kinase family. Heterodimer of a catalytic subunit PIK3CG and a PIK3R5 or PIK3R6 regulatory subunit. Interacts with GRK2 through the PIK helical domain. Interaction with GRK2 is required for targeting to agonist-occupied receptor. Interacts with PDE3B; regulates PDE3B activity and thereby cAMP levels in cells. Interacts with TPM2. Interacts with EPHA8; regulates integrin-mediated cell adhesion to substrate. Interacts with HRAS; the interaction is required for membrane recruitment and beta-gamma G protein dimer-dependent activation of the PI3K gamma complex PIK3CG:PIK3R6. Post-translationally, autophosphorylation at Ser-1101 has no effect on the phosphatidylinositol-4,5-bisphosphate 3-kinase activity. As to expression, pancreas, skeletal muscle, liver and heart.

The protein resides in the cytoplasm. The protein localises to the cell membrane. The catalysed reaction is a 1,2-diacyl-sn-glycero-3-phospho-(1D-myo-inositol) + ATP = a 1,2-diacyl-sn-glycero-3-phospho-(1D-myo-inositol-3-phosphate) + ADP + H(+). It catalyses the reaction a 1,2-diacyl-sn-glycero-3-phospho-(1D-myo-inositol-4,5-bisphosphate) + ATP = a 1,2-diacyl-sn-glycero-3-phospho-(1D-myo-inositol-3,4,5-trisphosphate) + ADP + H(+). It carries out the reaction a 1,2-diacyl-sn-glycero-3-phospho-(1D-myo-inositol 4-phosphate) + ATP = a 1,2-diacyl-sn-glycero-3-phospho-(1D-myo-inositol-3,4-bisphosphate) + ADP + H(+). The enzyme catalyses L-seryl-[protein] + ATP = O-phospho-L-seryl-[protein] + ADP + H(+). The protein operates within phospholipid metabolism; phosphatidylinositol phosphate biosynthesis. Its activity is regulated as follows. Activated by both the alpha and the beta-gamma G proteins following stimulation of G protein-coupled receptors (GPCRs). Activation by GPCRs is assisted by the regulatory subunits (PIK3R5 or PIK3R6) leading to the translocation from the cytosol to the plasma membrane and to kinase activation. Inhibited by AS-604850 and AS-605240. Phosphoinositide-3-kinase (PI3K) that phosphorylates PtdIns(4,5)P2 (Phosphatidylinositol 4,5-bisphosphate) to generate phosphatidylinositol 3,4,5-trisphosphate (PIP3). PIP3 plays a key role by recruiting PH domain-containing proteins to the membrane, including AKT1 and PDPK1, activating signaling cascades involved in cell growth, survival, proliferation, motility and morphology. Links G-protein coupled receptor activation to PIP3 production. Involved in immune, inflammatory and allergic responses. Modulates leukocyte chemotaxis to inflammatory sites and in response to chemoattractant agents. May control leukocyte polarization and migration by regulating the spatial accumulation of PIP3 and by regulating the organization of F-actin formation and integrin-based adhesion at the leading edge. Controls motility of dendritic cells. Together with PIK3CD is involved in natural killer (NK) cell development and migration towards the sites of inflammation. Participates in T-lymphocyte migration. Regulates T-lymphocyte proliferation, activation, and cytokine production. Together with PIK3CD participates in T-lymphocyte development. Required for B-lymphocyte development and signaling. Together with PIK3CD participates in neutrophil respiratory burst. Together with PIK3CD is involved in neutrophil chemotaxis and extravasation. Together with PIK3CB promotes platelet aggregation and thrombosis. Regulates alpha-IIb/beta-3 integrins (ITGA2B/ ITGB3) adhesive function in platelets downstream of P2Y12 through a lipid kinase activity-independent mechanism. May have also a lipid kinase activity-dependent function in platelet aggregation. Involved in endothelial progenitor cell migration. Negative regulator of cardiac contractility. Modulates cardiac contractility by anchoring protein kinase A (PKA) and PDE3B activation, reducing cAMP levels. Regulates cardiac contractility also by promoting beta-adrenergic receptor internalization by binding to GRK2 and by non-muscle tropomyosin phosphorylation. Also has serine/threonine protein kinase activity: both lipid and protein kinase activities are required for beta-adrenergic receptor endocytosis. May also have a scaffolding role in modulating cardiac contractility. Contributes to cardiac hypertrophy under pathological stress. Through simultaneous binding of PDE3B to RAPGEF3 and PIK3R6 is assembled in a signaling complex in which the PI3K gamma complex is activated by RAPGEF3 and which is involved in angiogenesis. In neutrophils, participates in a phospholipase C-activating N-formyl peptide-activated GPCR (G protein-coupled receptor) signaling pathway downstream of RASGRP4-mediated Ras-activation, to promote neutrophil functional responses. This chain is Phosphatidylinositol 4,5-bisphosphate 3-kinase catalytic subunit gamma isoform (PIK3CG), found in Homo sapiens (Human).